A 687-amino-acid chain; its full sequence is TWiK family of potassium channels protein 12 (687 aa).

At 1-21 the chain is on the cytoplasmic side; the sequence is MTLFQKLQWFCQLIRLRAYYK. A helical transmembrane segment spans residues 22–42; it reads FLLLIAYTLFGAWLFRFYELQ. Residues N53, N77, and N98 are each glycosylated (N-linked (GlcNAc...) asparagine). Residues 112-132 constitute an intramembrane region (pore-forming); sequence WTWTGAMFYAGQLYTTIGYGY. A helical membrane pass occupies residues 142–162; it reads ICTVLYALFGIPCFLMYLKAI. At 163-212 the chain is on the cytoplasmic side; that stretch reads GKTLSKRLKKIYKRVRRSAFGKFLLPTRVTATKDGFEDPDASAEERKRKP. A helical membrane pass occupies residues 213–233; sequence FPIPIAIILLIIWICFSASMF. The segment at residues 242–262 is an intramembrane region (pore-forming); it reads FPSAVYFFIVSISTVGLGDML. The helical transmembrane segment at 270 to 290 threads the bilayer; it reads VFNFLLILFGLALLSMCFELI. At 291-687 the chain is on the cytoplasmic side; that stretch reads TDRIAKWKQK…SKRDAPVNIV (397 aa). The disordered stretch occupies residues 661-687; it reads SPSTSTSTSMIDSGYDLSKRDAPVNIV. A compositionally biased stretch (basic and acidic residues) spans 677-687; sequence LSKRDAPVNIV.

This sequence belongs to the two pore domain potassium channel (TC 1.A.1.8) family.

It localises to the membrane. This chain is TWiK family of potassium channels protein 12, found in Caenorhabditis briggsae.